The primary structure comprises 160 residues: Transcription antitermination protein NusB (160 aa).

It belongs to the NusB family.

Involved in transcription antitermination. Required for transcription of ribosomal RNA (rRNA) genes. Binds specifically to the boxA antiterminator sequence of the ribosomal RNA (rrn) operons. The sequence is that of Transcription antitermination protein NusB from Salinibacter ruber (strain DSM 13855 / M31).